Here is a 45-residue protein sequence, read N- to C-terminus: Cytochrome b559 subunit beta (45 aa).

Thr2 carries the post-translational modification N-acetylthreonine. The Cytoplasmic segment spans residues 2–17; the sequence is TSNTPNQEPVSYPIFT. Residues 18-42 form a helical membrane-spanning segment; sequence VRWVAVHTLAVPTIFFLGAIAAMQF. Residue His24 participates in heme binding. Over 43 to 45 the chain is Lumenal; sequence IQR.

In terms of assembly, heterodimer of an alpha subunit and a beta subunit. PSII is composed of 1 copy each of membrane proteins PsbA, PsbB, PsbC, PsbD, PsbE, PsbF, PsbH, PsbI, PsbJ, PsbK, PsbL, PsbM, PsbT, PsbX, PsbY, PsbZ, Psb30/Ycf12, peripheral proteins PsbO, CyanoQ (PsbQ), PsbU, PsbV and a large number of cofactors. It forms dimeric complexes. Part of a photosystem II (PSII) assembly intermediate complex PSII-I; crystallized from a strain deleted of psbJ, it forms monomeric PSII before addition of the oxygen evolving complex. PSII-I includes 3 assembly factors not found in mature PSII (Psb27, Psb28 and Psb34). Requires heme b as cofactor.

It is found in the cellular thylakoid membrane. This b-type cytochrome is tightly associated with the reaction center of photosystem II (PSII). PSII is a light-driven water:plastoquinone oxidoreductase that uses light energy to abstract electrons from H(2)O, generating O(2) and a proton gradient subsequently used for ATP formation. It consists of a core antenna complex that captures photons, and an electron transfer chain that converts photonic excitation into a charge separation. The polypeptide is Cytochrome b559 subunit beta (Thermosynechococcus vestitus (strain NIES-2133 / IAM M-273 / BP-1)).